An 837-amino-acid chain; its full sequence is Translation initiation factor IF-2 (837 aa).

Disordered regions lie at residues 1–44 (MTEK…VRKS) and 62–251 (KAQE…TKPA). Composition is skewed to basic and acidic residues over residues 62 to 102 (KAQE…EAKP) and 111 to 165 (ADPE…HNDS). Basic residues predominate over residues 189 to 205 (RENHIRTGKNKVTKAKK). The segment covering 206-229 (GGRDDNGSKDERSADRRNQKDMRG) has biased composition (basic and acidic residues). Positions 242 to 251 (TLQQAFTKPA) are enriched in polar residues. The 170-residue stretch at 337-506 (QRAPVVTIMG…LLQSEVLELT (170 aa)) folds into the tr-type G domain. Residues 346–353 (GHVDHGKT) are G1. A GTP-binding site is contributed by 346–353 (GHVDHGKT). A G2 region spans residues 371 to 375 (GITQH). A G3 region spans residues 392-395 (DTPG). Residues 392-396 (DTPGH) and 446-449 (NKID) contribute to the GTP site. Positions 446 to 449 (NKID) are G4. The tract at residues 482–484 (SAK) is G5.

The protein belongs to the TRAFAC class translation factor GTPase superfamily. Classic translation factor GTPase family. IF-2 subfamily.

It localises to the cytoplasm. In terms of biological role, one of the essential components for the initiation of protein synthesis. Protects formylmethionyl-tRNA from spontaneous hydrolysis and promotes its binding to the 30S ribosomal subunits. Also involved in the hydrolysis of GTP during the formation of the 70S ribosomal complex. This chain is Translation initiation factor IF-2, found in Actinobacillus succinogenes (strain ATCC 55618 / DSM 22257 / CCUG 43843 / 130Z).